The sequence spans 730 residues: MKTKTSIFQFIVASVLTLLINDSSAATPPPPISNSSTSCNKTCGGISIPFPFGIGGKDCYLNGWYEVICNTTTSDSNTTVPLLSMINREVVNISLPDSNEPYGLVQIKGPVTSLGCSSNTSEGPQNSLPVLNVTGKGSPYFLTDENRLVAVGCGIKALMTDTESEILGCESSCEHRKSGEEVTNLICTGYRCCQARLPVGRPQAITVNIENSSGGEETCKVAFLTDKRYSPSNVTEPEQFHNNGYVVLELGWYFATSNSRFKSLLGCTNMSRKGSGFSDDNCSCEYDYFSGMSYRNCYCDYGYTGNPYLRGGCVDTDSCEGNHNCGEDAHCVNMPGPMSMCRPNPKITKPTKPPVLQGILIGLSGLVFFVGLFWLFKLIKKRRNINRSKKFFKRNGGLLLKQQLTTKDGNVEMSKIFSSKELRKATDNFSIDRVLGQGGQGTVYKGMLVDGSIVAVKRSKVVDEDKMEEFINEIVLLSQINHRNIVKLLGCCLETEVPILVYEYIPNGDLFKRLHDESDDYTMTWEVRLRIAIEIAGALTYMHSAASFPIFHRDIKTTNILLDEKYRAKVSDFGTSRSVTLDQTHLTTLVAGTFGYMDPEYFLSSQYTHKSDVYSFGVVLVELITGEKPLSRVRSEEGRGLATHFLEAMKENRVIDIIDIRIKDESKLEQVMAVAKLARKCLNRKGKNRPNMKEVSNELERIRSSPEDLDVRTENEDEEEDQPMAINNKR.

The signal sequence occupies residues methionine 1 to alanine 25. The Extracellular segment spans residues alanine 26–glycine 358. N-linked (GlcNAc...) asparagine glycosylation is found at asparagine 34, asparagine 40, asparagine 70, asparagine 77, asparagine 92, asparagine 119, asparagine 132, asparagine 211, asparagine 233, asparagine 269, and asparagine 281. Positions cysteine 282–cysteine 341 are atypical EGF-like. Intrachain disulfides connect cysteine 284/cysteine 297, cysteine 319/cysteine 331, and cysteine 325/cysteine 341. The helical transmembrane segment at isoleucine 359–isoleucine 379 threads the bilayer. At lysine 380–arginine 730 the chain is on the cytoplasmic side. The Protein kinase domain maps to phenylalanine 429–isoleucine 702. ATP contacts are provided by residues leucine 435 to valine 443 and lysine 457. Residue tyrosine 502 is modified to Phosphotyrosine. The active-site Proton acceptor is the aspartate 554. Threonine 588 and threonine 593 each carry phosphothreonine. Tyrosine 601 is subject to Phosphotyrosine. Residues lysine 685 to arginine 730 form a disordered region. Positions asparagine 691–glutamate 714 are enriched in basic and acidic residues.

This sequence belongs to the protein kinase superfamily. Ser/Thr protein kinase family. In terms of tissue distribution, preferentially expressed in roots and flowers.

It is found in the membrane. The enzyme catalyses L-seryl-[protein] + ATP = O-phospho-L-seryl-[protein] + ADP + H(+). It carries out the reaction L-threonyl-[protein] + ATP = O-phospho-L-threonyl-[protein] + ADP + H(+). Functionally, serine/threonine-protein kinase that may function as a signaling receptor of extracellular matrix component. The polypeptide is Wall-associated receptor kinase-like 1 (WAKL1) (Arabidopsis thaliana (Mouse-ear cress)).